A 189-amino-acid polypeptide reads, in one-letter code: MGLLDAGITKHNVVVTSVDNVLNWARLSSLWPMGFGLACCAIEMMATNASNYDLERFGIFPRSSPRQSDLMIVAGTVTMKMAERVVRLYEQMPEPRYVLSMGSCSNCGGPYWEHGYHVLKGVDRVIPVDVYVPGCPPRPESLIGGLMKVQELIRMEQIGLSRADALKKLAEKSIDPQSVIEQHRQVARA.

[4Fe-4S] cluster contacts are provided by cysteine 39, cysteine 40, cysteine 104, and cysteine 135.

Belongs to the complex I 20 kDa subunit family. As to quaternary structure, NDH-1 is composed of 14 different subunits. Subunits NuoB, C, D, E, F, and G constitute the peripheral sector of the complex. The cofactor is [4Fe-4S] cluster.

The protein resides in the cell inner membrane. The enzyme catalyses a quinone + NADH + 5 H(+)(in) = a quinol + NAD(+) + 4 H(+)(out). In terms of biological role, NDH-1 shuttles electrons from NADH, via FMN and iron-sulfur (Fe-S) centers, to quinones in the respiratory chain. The immediate electron acceptor for the enzyme in this species is believed to be a menaquinone. Couples the redox reaction to proton translocation (for every two electrons transferred, four hydrogen ions are translocated across the cytoplasmic membrane), and thus conserves the redox energy in a proton gradient. The chain is NADH-quinone oxidoreductase subunit B from Chlorobium limicola (strain DSM 245 / NBRC 103803 / 6330).